Reading from the N-terminus, the 327-residue chain is GTPase Obg (327 aa).

Residues 1-159 (MQFIDQANII…WEVQLELKLL (159 aa)) enclose the Obg domain. Positions 160-327 (AEVGIIGLPN…SLLFEVWKRI (168 aa)) constitute an OBG-type G domain. ATP-binding positions include 166 to 173 (GLPNAGKS), 191 to 195 (FTTLI), 213 to 216 (DIPG), 280 to 283 (NKME), and 309 to 311 (SSS). Residues serine 173 and threonine 193 each coordinate Mg(2+).

Belongs to the TRAFAC class OBG-HflX-like GTPase superfamily. OBG GTPase family. Monomer. Mg(2+) is required as a cofactor.

The protein localises to the cytoplasm. An essential GTPase which binds GTP, GDP and possibly (p)ppGpp with moderate affinity, with high nucleotide exchange rates and a fairly low GTP hydrolysis rate. Plays a role in control of the cell cycle, stress response, ribosome biogenesis and in those bacteria that undergo differentiation, in morphogenesis control. This Prochlorococcus marinus (strain MIT 9312) protein is GTPase Obg.